A 185-amino-acid polypeptide reads, in one-letter code: Ribosome-recycling factor (185 aa).

The protein belongs to the RRF family.

The protein localises to the cytoplasm. In terms of biological role, responsible for the release of ribosomes from messenger RNA at the termination of protein biosynthesis. May increase the efficiency of translation by recycling ribosomes from one round of translation to another. This chain is Ribosome-recycling factor, found in Methylococcus capsulatus (strain ATCC 33009 / NCIMB 11132 / Bath).